The chain runs to 707 residues: Vicilin-like seed storage protein At2g18540 (707 aa).

The signal sequence occupies residues 1 to 24 (MSRFRILPLSIFLCFVSLFFCTES). A Cupin type-1 1 domain is found at 42–185 (PLLVKKDQRT…AFAVPEDILR (144 aa)). 6 N-linked (GlcNAc...) asparagine glycosylation sites follow: asparagine 60, asparagine 203, asparagine 285, asparagine 356, asparagine 396, and asparagine 399. The Cupin type-1 2 domain maps to 247 to 403 (FNVFEEDPDF…SFNLSNETIK (157 aa)). The span at 439-696 (EEEEIERRRK…KKEEEEEKRR (258 aa)) shows a compositional bias: basic and acidic residues. Residues 439–707 (EEEEIERRRK…PPQPKPPEEI (269 aa)) are disordered. A compositionally biased stretch (pro residues) spans 698-707 (PPQPKPPEEI).

This sequence belongs to the 7S seed storage protein family.

Seed storage protein. This Arabidopsis thaliana (Mouse-ear cress) protein is Vicilin-like seed storage protein At2g18540.